A 1422-amino-acid polypeptide reads, in one-letter code: MATTIQNNFRIRRNFGKINKIAEIPNLIAIQKFSYDKFLQADVPPEKRDDTGLQGVFKSVFPIKDFNETSSLEFVSYHLEKPKYDVDECHQRGMTYSAPIKVVVRLVVWDKDEETGAQSIRDVKEQEVYFGEIPLMTENGTFIINGTERVVVSQLHRSPGAFFDHDKGKSHSSGKLLYNARIIPYRGSWIDFEFDHKDILYVRIDRRRKLPATVLLRALGATPDTAKKDPVEFHGSAEEILKYYYDTETIRVEGKGKFEKDLVPDLLKGQRATRDIRDPKSSEVIVKKNRKYTESAIKKLVAAKMKSLPVEPEEVYTKISAEDVVDETTGEVLLEVNEEVTEAKVEELRKRNINEFKVLFIDNLNILPALRDTLMQDKISTPEEAIMEIYRRLRPGDPPTPETATNLFVNLFFNAERYDLSKVGRLKLNYKFGIEEPLENTVLTKRDILEVVRFLIDLKNGKPNKDVDDIDHLGNRRVRAVGELLENQYRIGLVRMERAIKERMSLQEIETLMPHDLINAKPVTAVIKEFFGSSQLSQFMDQTNPLSEVTHKRRLSALGPGGLTRERAGFEVRDVHSTHYGRICPIETPEGPNIGLIASLSTYARVNEYGFVETPYRKVEKGRVTDEVTFYSALEEEKHIIAQANAPVDKKGNFTEAKVWCRKEGEYIYVRPDEVDLMDVSPNQLVSVAASLVPFLENDDANRALMGSNMQRQAVPLLRTQAPLVGTGIEAIVARDSGVTTVAKRDGVVQSVDASRIVVKADVPTSATDVANEVDIYNLIKYQRSNQNTCINQKPIVKPGERVRKGDVIADGPATEMGELALGQNVVVAFMPWQGYNFEDSILLSERLIKEDVFTSVHIEEFECVARDTKLGKEEITRDIPNVGEEALKDLDESGIIRIGAEVKPGDILVGKITPKGETQLSPEEKLLRAIFGEKAGDVRDSSLRVPPGVSGTVINAKVFSRKGVEKDERAKAIEEMEEAKLLKDQNDEIRIIQDSAFQKIRRLLLGKEVTARLVDDKGEQLLKKGDVLDDALLDTVPQRYWGEIAVAGDVQDLARKIIDNFEEQKELVKLLFGEKIGRLKKGDELPPGVIKMVKVYVAIKRKLAVGDKMAGRHGNKGVVSRVLPEEDLPYLEDGTPVDIVLNPLGVPSRMNVGQILETHLGWAARNVGLRLQEMIEKEYGPEQLRKKLRAAFAGTEGGPASDRLAALIDDVPEKELPKLAQKLRRGMHVATPVFDGAREDEMKALMEEGSATLQSILFDGRTGEPFDQDVTVGVMYMLKLHHLVDEKIHARSIGPYSLVTQQPLGGKAQFGGQRLGEMEVWAMEAYGAAYSLQEFLTVKSDDVVGRTRMYEAIVKGENTLESGLPESFNVLIKELQSLALDVELLETPEAQAAREAAERDLGGGPLGAPRGAVASGEKSSA.

The interval 1392-1422 is disordered; the sequence is QAAREAAERDLGGGPLGAPRGAVASGEKSSA.

This sequence belongs to the RNA polymerase beta chain family. In terms of assembly, the RNAP catalytic core consists of 2 alpha, 1 beta, 1 beta' and 1 omega subunit. When a sigma factor is associated with the core the holoenzyme is formed, which can initiate transcription.

It catalyses the reaction RNA(n) + a ribonucleoside 5'-triphosphate = RNA(n+1) + diphosphate. In terms of biological role, DNA-dependent RNA polymerase catalyzes the transcription of DNA into RNA using the four ribonucleoside triphosphates as substrates. The polypeptide is DNA-directed RNA polymerase subunit beta (Anaeromyxobacter dehalogenans (strain 2CP-C)).